Here is a 288-residue protein sequence, read N- to C-terminus: MRCFVYVLVCVVASVSYSRAQLPGAGGPGVFPGGVPTIGPVIPDPTRTETCAKFWVQEGDSCYLFDSGAFLRQVAASRPVVVNNQDGLFQAAANMYCGQMHPNATLVTVNSLAENNFLYEWAVRMMVEPEPVWIGLHVGPAGLWQWYSGEPVTYTNWEGMVAPRAELGLGAMIFDADIIAQMFNNQVEITPQWVPEHGRNDRHSLICEYHPSGMTAAATNAPTTPPMATAPPMAATTRSPVMFQNNPGNLVNRLTGGRFGGSLLHEIPRRQRMRPSNYRKNPYFGIQP.

The N-terminal stretch at 1-20 is a signal peptide; it reads MRCFVYVLVCVVASVSYSRA. The region spanning 93-163 is the C-type lectin domain; the sequence is ANMYCGQMHP…YTNWEGMVAP (71 aa). The N-linked (GlcNAc...) asparagine glycan is linked to Asn-103.

Spines and tube feet.

Matrix protein of the sea urchin embryo spicule. The function of the matrix proteins is to direct crystal growth in certain orientations and inhibit growth in others. The chain is 30 kDa spicule matrix protein (SM30) from Hemicentrotus pulcherrimus (Sea urchin).